The chain runs to 186 residues: NADH-dependent FMN reductase SfnE (186 aa).

It belongs to the SsuE family.

It catalyses the reaction FMNH2 + NAD(+) = FMN + NADH + 2 H(+). Involved in the dimethyl sulfide degradation pathway. Catalyzes the NADH-dependent reduction of FMN. This chain is NADH-dependent FMN reductase SfnE, found in Pseudomonas putida (Arthrobacter siderocapsulatus).